The following is a 121-amino-acid chain: Large ribosomal subunit protein uL18 (121 aa).

The protein belongs to the universal ribosomal protein uL18 family. Part of the 50S ribosomal subunit; part of the 5S rRNA/L5/L18/L25 subcomplex. Contacts the 5S and 23S rRNAs.

This is one of the proteins that bind and probably mediate the attachment of the 5S RNA into the large ribosomal subunit, where it forms part of the central protuberance. The polypeptide is Large ribosomal subunit protein uL18 (Paraburkholderia phytofirmans (strain DSM 17436 / LMG 22146 / PsJN) (Burkholderia phytofirmans)).